Consider the following 306-residue polypeptide: Ribonuclease BN (306 aa).

Positions 64, 66, 68, 69, 141, 212, and 270 each coordinate Zn(2+). Asp-68 (proton acceptor) is an active-site residue.

It belongs to the RNase Z family. RNase BN subfamily. As to quaternary structure, homodimer. Requires Zn(2+) as cofactor.

Functionally, zinc phosphodiesterase, which has both exoribonuclease and endoribonuclease activities. In Klebsiella pneumoniae (strain 342), this protein is Ribonuclease BN.